An 84-amino-acid polypeptide reads, in one-letter code: Cell division topological specificity factor (84 aa).

It belongs to the MinE family.

Prevents the cell division inhibition by proteins MinC and MinD at internal division sites while permitting inhibition at polar sites. This ensures cell division at the proper site by restricting the formation of a division septum at the midpoint of the long axis of the cell. In Paraburkholderia phymatum (strain DSM 17167 / CIP 108236 / LMG 21445 / STM815) (Burkholderia phymatum), this protein is Cell division topological specificity factor.